The sequence spans 501 residues: Aspartyl/glutamyl-tRNA(Asn/Gln) amidotransferase subunit B (501 aa).

The interval 276 to 299 (HYQEADGSTSKGRPKETAEDYRYF) is disordered. A compositionally biased stretch (basic and acidic residues) spans 288–299 (RPKETAEDYRYF).

This sequence belongs to the GatB/GatE family. GatB subfamily. Heterotrimer of A, B and C subunits.

It catalyses the reaction L-glutamyl-tRNA(Gln) + L-glutamine + ATP + H2O = L-glutaminyl-tRNA(Gln) + L-glutamate + ADP + phosphate + H(+). The catalysed reaction is L-aspartyl-tRNA(Asn) + L-glutamine + ATP + H2O = L-asparaginyl-tRNA(Asn) + L-glutamate + ADP + phosphate + 2 H(+). Functionally, allows the formation of correctly charged Asn-tRNA(Asn) or Gln-tRNA(Gln) through the transamidation of misacylated Asp-tRNA(Asn) or Glu-tRNA(Gln) in organisms which lack either or both of asparaginyl-tRNA or glutaminyl-tRNA synthetases. The reaction takes place in the presence of glutamine and ATP through an activated phospho-Asp-tRNA(Asn) or phospho-Glu-tRNA(Gln). The sequence is that of Aspartyl/glutamyl-tRNA(Asn/Gln) amidotransferase subunit B from Corynebacterium glutamicum (strain R).